Reading from the N-terminus, the 337-residue chain is Neurogenic differentiation factor 6 (337 aa).

Residues Gln-28–Arg-80 are disordered. The span at Glu-54–Asn-71 shows a compositional bias: acidic residues. A Nuclear localization signal motif is present at residues Arg-80–Lys-86. Residues Phe-94–Leu-146 enclose the bHLH domain.

As to quaternary structure, efficient DNA binding requires dimerization with another bHLH protein. In terms of tissue distribution, specific to the nervous system of both embryos and adults. Highest levels in the cortical plate of the cerebrum.

The protein resides in the nucleus. Activates E box-dependent transcription in collaboration with TCF3/E47. May be a trans-acting factor involved in the development and maintenance of the mammalian nervous system. Transactivates the promoter of its own gene. This chain is Neurogenic differentiation factor 6 (Neurod6), found in Mus musculus (Mouse).